A 496-amino-acid chain; its full sequence is Putative BTB/POZ domain and WD-repeat protein R61 (496 aa).

One can recognise a BTB domain in the interval 8–78 (SNINLILNDE…MFSDIDIYKN (71 aa)). WD repeat units lie at residues 149 to 189 (KFPR…FNSK), 208 to 248 (IFDN…KEFQ), 250 to 285 (DYKI…RKVL), 291 to 330 (KSIG…IIKW), 333 to 371 (VSKS…KILE), and 422 to 464 (MYFS…DIIY).

This sequence belongs to the mimivirus BTB/WD family.

This chain is Putative BTB/POZ domain and WD-repeat protein R61, found in Acanthamoeba polyphaga (Amoeba).